The primary structure comprises 216 residues: Superoxide dismutase [Cu-Zn], chloroplastic (216 aa).

Residues Met1–Ala62 constitute a chloroplast transit peptide. Cu cation-binding residues include His108, His110, and His125. An intrachain disulfide couples Cys119 to Cys208. Residues His125, His133, His142, and Asp145 each contribute to the Zn(2+) site. His182 contributes to the Cu cation binding site.

Belongs to the Cu-Zn superoxide dismutase family. Homotetramer. Cu cation is required as a cofactor. Requires Zn(2+) as cofactor.

It localises to the plastid. It is found in the chloroplast. The catalysed reaction is 2 superoxide + 2 H(+) = H2O2 + O2. Destroys radicals which are normally produced within the cells and which are toxic to biological systems. The chain is Superoxide dismutase [Cu-Zn], chloroplastic (SODCP) from Zantedeschia aethiopica (White calla lily).